A 273-amino-acid chain; its full sequence is Bifunctional protein FolD (273 aa).

NADP(+)-binding positions include 152-154, threonine 179, and isoleucine 220; that span reads GRS.

This sequence belongs to the tetrahydrofolate dehydrogenase/cyclohydrolase family. As to quaternary structure, homodimer.

The enzyme catalyses (6R)-5,10-methylene-5,6,7,8-tetrahydrofolate + NADP(+) = (6R)-5,10-methenyltetrahydrofolate + NADPH. The catalysed reaction is (6R)-5,10-methenyltetrahydrofolate + H2O = (6R)-10-formyltetrahydrofolate + H(+). The protein operates within one-carbon metabolism; tetrahydrofolate interconversion. Its function is as follows. Catalyzes the oxidation of 5,10-methylenetetrahydrofolate to 5,10-methenyltetrahydrofolate and then the hydrolysis of 5,10-methenyltetrahydrofolate to 10-formyltetrahydrofolate. The protein is Bifunctional protein FolD of Petrotoga mobilis (strain DSM 10674 / SJ95).